We begin with the raw amino-acid sequence, 356 residues long: MDSKDQHGTKILERLVKGEIGDEELKELIRIRFEKRLQCGYKPTPQDQLASEMAFIKSLKDMKMSGELEAVNTELYELPTAAVAATLGSTLKQSACYFKEESMSIDEAEIAAYELDCERAQIKDGQTILDIGCGFGGLVLHIAQKYKNSHVTGLTNSAEQRNYIMLQVEKLSLSNVDVILADVTKHEFENEKKFDRILVVEAIEHMKNIQLFLKKISNWMKDEDSFLFVVHLCHKAFSQHFEALDEDDWYTSYVLPEGSVTYLSASALLYFQDDVSVVDQWLLSGTHMARSQEEWFKRFKINLEAASKALTVGLGSEEAANQVNIQYKTFFMGYVVQFSFNNGEEWMISHYLFKKK.

Residues 93–94 (QS), 128–136 (ILDIGCGFG), and 155–160 (TNSAEQ) contribute to the S-adenosyl-L-methionine site.

The protein belongs to the CFA/CMAS family. Expressed in stems, roots, flower buds and leaves.

Functionally, probable N-methyltransferase not involved in benzylisoquinoline metabolism. Shows no detectable activity with (s)-coclaurine, (R)- or (S)-reticuline, papaverine or (R,S)-tetrahydropapaverine. In Papaver somniferum (Opium poppy), this protein is N-methyltransferase 4 (NMT4).